A 125-amino-acid polypeptide reads, in one-letter code: Cyclic diguanosine monophosphate-binding protein PA4608 (125 aa).

6–13 contacts 3',3'-c-di-GMP; it reads DERRRFHR. The PilZ domain occupies 7–103; sequence ERRRFHRIAF…SISHLRRLVE (97 aa). The short motif at 9–13 is the RXXXR motif; surrounds the surface of the c-di-GMP binding site element; that stretch reads RRFHR. Positions 35–40 match the DXSXXG motif; surrounds the surface of the c-di-GMP binding site motif; that stretch reads DVSLHG. Trp-77 provides a ligand contact to 3',3'-c-di-GMP.

As to quaternary structure, monomer in both c-di-GMP-bound and free forms.

Its function is as follows. Binds the second messenger bis-(3'-5') cyclic dimeric guanosine monophosphate (c-di-GMP). Can bind two c-di-GMP molecules per monomer. May play a role in bacterial second-messenger regulated processes. Binding to c-di-GMP induces a conformational change of the C- and N-termini resulting in the exposure of a highly negative surface on one side of the protein to a possible effector protein. The protein is Cyclic diguanosine monophosphate-binding protein PA4608 of Pseudomonas aeruginosa (strain ATCC 15692 / DSM 22644 / CIP 104116 / JCM 14847 / LMG 12228 / 1C / PRS 101 / PAO1).